Consider the following 341-residue polypeptide: CRISPR-associated endonuclease Cas1 (341 aa).

Mn(2+)-binding residues include Glu173, His242, and Glu257.

This sequence belongs to the CRISPR-associated endonuclease Cas1 family. In terms of assembly, homodimer, forms a heterotetramer with a Cas2 homodimer. Mg(2+) serves as cofactor. The cofactor is Mn(2+).

Functionally, CRISPR (clustered regularly interspaced short palindromic repeat), is an adaptive immune system that provides protection against mobile genetic elements (viruses, transposable elements and conjugative plasmids). CRISPR clusters contain spacers, sequences complementary to antecedent mobile elements, and target invading nucleic acids. CRISPR clusters are transcribed and processed into CRISPR RNA (crRNA). Acts as a dsDNA endonuclease. Involved in the integration of spacer DNA into the CRISPR cassette. This Korarchaeum cryptofilum (strain OPF8) protein is CRISPR-associated endonuclease Cas1.